Reading from the N-terminus, the 157-residue chain is 2-C-methyl-D-erythritol 2,4-cyclodiphosphate synthase (157 aa).

Positions 8 and 10 each coordinate a divalent metal cation. Residues 8-10 and 34-35 contribute to the 4-CDP-2-C-methyl-D-erythritol 2-phosphate site; these read DVH and HS. Histidine 42 provides a ligand contact to a divalent metal cation. 4-CDP-2-C-methyl-D-erythritol 2-phosphate contacts are provided by residues 56–58, 61–65, 100–106, 132–135, phenylalanine 139, and arginine 142; these read DIG, FPDTD, AQAPKMA, and TTEE.

It belongs to the IspF family. As to quaternary structure, homotrimer. A divalent metal cation serves as cofactor.

The catalysed reaction is 4-CDP-2-C-methyl-D-erythritol 2-phosphate = 2-C-methyl-D-erythritol 2,4-cyclic diphosphate + CMP. Its pathway is isoprenoid biosynthesis; isopentenyl diphosphate biosynthesis via DXP pathway; isopentenyl diphosphate from 1-deoxy-D-xylulose 5-phosphate: step 4/6. In terms of biological role, involved in the biosynthesis of isopentenyl diphosphate (IPP) and dimethylallyl diphosphate (DMAPP), two major building blocks of isoprenoid compounds. Catalyzes the conversion of 4-diphosphocytidyl-2-C-methyl-D-erythritol 2-phosphate (CDP-ME2P) to 2-C-methyl-D-erythritol 2,4-cyclodiphosphate (ME-CPP) with a corresponding release of cytidine 5-monophosphate (CMP). This is 2-C-methyl-D-erythritol 2,4-cyclodiphosphate synthase from Pseudomonas entomophila (strain L48).